Reading from the N-terminus, the 242-residue chain is Proteasome subunit alpha (242 aa).

Belongs to the peptidase T1A family. As to quaternary structure, the 20S proteasome core is composed of 14 alpha and 14 beta subunits that assemble into four stacked heptameric rings, resulting in a barrel-shaped structure. The two inner rings, each composed of seven catalytic beta subunits, are sandwiched by two outer rings, each composed of seven alpha subunits. The catalytic chamber with the active sites is on the inside of the barrel. Has a gated structure, the ends of the cylinder being occluded by the N-termini of the alpha-subunits. Is capped by the proteasome-associated ATPase, ARC.

Its subcellular location is the cytoplasm. The protein operates within protein degradation; proteasomal Pup-dependent pathway. With respect to regulation, the formation of the proteasomal ATPase ARC-20S proteasome complex, likely via the docking of the C-termini of ARC into the intersubunit pockets in the alpha-rings, may trigger opening of the gate for substrate entry. Interconversion between the open-gate and close-gate conformations leads to a dynamic regulation of the 20S proteasome proteolysis activity. Functionally, component of the proteasome core, a large protease complex with broad specificity involved in protein degradation. The polypeptide is Proteasome subunit alpha (Renibacterium salmoninarum (strain ATCC 33209 / DSM 20767 / JCM 11484 / NBRC 15589 / NCIMB 2235)).